The sequence spans 319 residues: Carboxylesterase NlhH (319 aa).

The Involved in the stabilization of the negatively charged intermediate by the formation of the oxyanion hole signature appears at 88 to 90; it reads HGG. Active-site residues include Ser-162, Asp-260, and His-290.

The protein belongs to the 'GDXG' lipolytic enzyme family. As to quaternary structure, monomer.

The catalysed reaction is a carboxylic ester + H2O = an alcohol + a carboxylate + H(+). Hydrolyzes various short-chain esters. The polypeptide is Carboxylesterase NlhH (nlhH) (Mycobacterium tuberculosis (strain CDC 1551 / Oshkosh)).